A 152-amino-acid chain; its full sequence is Ribosome maturation factor RimP (152 aa).

Belongs to the RimP family.

The protein resides in the cytoplasm. In terms of biological role, required for maturation of 30S ribosomal subunits. The chain is Ribosome maturation factor RimP from Elusimicrobium minutum (strain Pei191).